We begin with the raw amino-acid sequence, 144 residues long: Lysozyme C II (144 aa).

The first 15 residues, 1-15, serve as a signal peptide directing secretion; that stretch reads MRAVVVLLLVAVASA. Residues 16–144 form the C-type lysozyme domain; sequence KVYDRCELAR…LRSYVAGCGV (129 aa). Cystine bridges form between Cys21-Cys142, Cys45-Cys130, Cys79-Cys95, and Cys91-Cys109. Residues Glu50 and Asp67 contribute to the active site.

Its subcellular location is the secreted. The catalysed reaction is Hydrolysis of (1-&gt;4)-beta-linkages between N-acetylmuramic acid and N-acetyl-D-glucosamine residues in a peptidoglycan and between N-acetyl-D-glucosamine residues in chitodextrins.. In terms of biological role, lysozymes have primarily a bacteriolytic function; those in tissues and body fluids are associated with the monocyte-macrophage system and enhance the activity of immunoagents. Has antibacterial activity against the Gram positive bacterium P.citreus. Has no antibacterial activity against the Gram negative bacteria E.coli and Y.ruckeri. Does not have hemolytic activity against trout erythrocytes. This chain is Lysozyme C II, found in Oncorhynchus mykiss (Rainbow trout).